Reading from the N-terminus, the 316-residue chain is Probable cell division protein WhiA (316 aa).

The H-T-H motif DNA-binding region spans 275–309; it reads TLKELGEMVASGKISKSGINHRLRKLDEIAEQLRT.

Belongs to the WhiA family.

Its function is as follows. Involved in cell division and chromosome segregation. The sequence is that of Probable cell division protein WhiA from Bacillus velezensis (strain DSM 23117 / BGSC 10A6 / LMG 26770 / FZB42) (Bacillus amyloliquefaciens subsp. plantarum).